We begin with the raw amino-acid sequence, 98 residues long: NADH-ubiquinone oxidoreductase chain 4L (98 aa).

The next 3 membrane-spanning stretches (helical) occupy residues 1 to 21 (MSMV…GLLI), 30 to 50 (LLCL…TILT), and 61 to 81 (IILL…LVMI).

It belongs to the complex I subunit 4L family. As to quaternary structure, core subunit of respiratory chain NADH dehydrogenase (Complex I) which is composed of 45 different subunits.

Its subcellular location is the mitochondrion inner membrane. The enzyme catalyses a ubiquinone + NADH + 5 H(+)(in) = a ubiquinol + NAD(+) + 4 H(+)(out). Core subunit of the mitochondrial membrane respiratory chain NADH dehydrogenase (Complex I) which catalyzes electron transfer from NADH through the respiratory chain, using ubiquinone as an electron acceptor. Part of the enzyme membrane arm which is embedded in the lipid bilayer and involved in proton translocation. This chain is NADH-ubiquinone oxidoreductase chain 4L (MT-ND4L), found in Gulo gulo (Wolverine).